The following is a 387-amino-acid chain: Succinate--CoA ligase [ADP-forming] subunit beta (387 aa).

The ATP-grasp domain maps to 9–245 (KDLLESYGLK…KSQENAKELK (237 aa)). ATP is bound by residues Lys-46, 53-55 (GRG), Glu-100, Tyr-103, and Glu-108. Mg(2+)-binding residues include Asn-200 and Asp-214. Substrate-binding positions include Asn-265 and 322-324 (GIV).

This sequence belongs to the succinate/malate CoA ligase beta subunit family. In terms of assembly, heterotetramer of two alpha and two beta subunits. Mg(2+) is required as a cofactor.

It carries out the reaction succinate + ATP + CoA = succinyl-CoA + ADP + phosphate. The catalysed reaction is GTP + succinate + CoA = succinyl-CoA + GDP + phosphate. It functions in the pathway carbohydrate metabolism; tricarboxylic acid cycle; succinate from succinyl-CoA (ligase route): step 1/1. Its function is as follows. Succinyl-CoA synthetase functions in the citric acid cycle (TCA), coupling the hydrolysis of succinyl-CoA to the synthesis of either ATP or GTP and thus represents the only step of substrate-level phosphorylation in the TCA. The beta subunit provides nucleotide specificity of the enzyme and binds the substrate succinate, while the binding sites for coenzyme A and phosphate are found in the alpha subunit. This Francisella tularensis subsp. holarctica (strain OSU18) protein is Succinate--CoA ligase [ADP-forming] subunit beta.